Consider the following 174-residue polypeptide: Large ribosomal subunit protein uL10 (174 aa).

This sequence belongs to the universal ribosomal protein uL10 family. Part of the ribosomal stalk of the 50S ribosomal subunit. The N-terminus interacts with L11 and the large rRNA to form the base of the stalk. The C-terminus forms an elongated spine to which L12 dimers bind in a sequential fashion forming a multimeric L10(L12)X complex.

Functionally, forms part of the ribosomal stalk, playing a central role in the interaction of the ribosome with GTP-bound translation factors. The polypeptide is Large ribosomal subunit protein uL10 (Desulfovibrio desulfuricans (strain ATCC 27774 / DSM 6949 / MB)).